We begin with the raw amino-acid sequence, 120 residues long: uncharacterized protein (120 aa).

This is an uncharacterized protein from Bacillus subtilis (strain 168).